The primary structure comprises 439 residues: Protein ABHD8 (439 aa).

Disordered regions lie at residues 49–70 and 124–156; these read AGPAPAAAPPPPSSASSDAAQG and PAGSDGRLAPGSAGSGSGSGSGGRRRRARRPKR. Residues 136–145 are compositionally biased toward gly residues; that stretch reads AGSGSGSGSG. The span at 146–156 shows a compositional bias: basic residues; it reads GRRRRARRPKR. One can recognise an AB hydrolase-1 domain in the interval 177 to 279; the sequence is VLFFIHGVGG…HKVIMINGGG (103 aa). Catalysis depends on charge relay system residues Ser-252, Asp-370, and His-398.

The protein belongs to the AB hydrolase superfamily. In terms of assembly, interacts with NLRP3 (via NACHT and LLR domains); this interaction is enhanced in the presence of NLRP3 inflammasome inducers, such as ATP, nigericin, silica, or alum. Interacts with ZDHHC12. As to quaternary structure, (Microbial infection) Interacts with SARS-CoV-2 nucleoprotein N; this interaction disrupts the NLRP3-ABHD8 association, enhancing NLRP3 stability, ultimately leading to increased inflammasome activation.

It localises to the cytoplasm. Negatively regulates NLRP3-driven inflammation. Promotes NLRP3 degradation through the chaperone-mediated autophagy (CMA) pathway, hence attenuating inflammasome activation and IL1B secretion. Acts by recruiting palmitoyltransferase ZDHHC12 to NLRP3, facilitating NLRP3 palmitoylation and subsequent degradation. This chain is Protein ABHD8, found in Homo sapiens (Human).